Consider the following 888-residue polypeptide: Alanine--tRNA ligase (888 aa).

Zn(2+) is bound by residues His-573, His-577, Cys-676, and His-680.

The protein belongs to the class-II aminoacyl-tRNA synthetase family. Zn(2+) is required as a cofactor.

The protein resides in the cytoplasm. The catalysed reaction is tRNA(Ala) + L-alanine + ATP = L-alanyl-tRNA(Ala) + AMP + diphosphate. Its function is as follows. Catalyzes the attachment of alanine to tRNA(Ala) in a two-step reaction: alanine is first activated by ATP to form Ala-AMP and then transferred to the acceptor end of tRNA(Ala). Also edits incorrectly charged Ser-tRNA(Ala) and Gly-tRNA(Ala) via its editing domain. The sequence is that of Alanine--tRNA ligase from Corynebacterium diphtheriae (strain ATCC 700971 / NCTC 13129 / Biotype gravis).